The following is a 123-amino-acid chain: MKLLLLALPMLVLLPQVIPAYSGEKKCWNRSGHCRKQCKDGEAVKDTCKNLRACCVPSNEDHRRVPTTSPTPLSDSTRGVIDDILTVRFTTDYFEVSSKKNMVEESEVGQGTQTSLPNVHHSS.

An N-terminal signal peptide occupies residues 1–19; the sequence is MKLLLLALPMLVLLPQVIP. Cystine bridges form between Cys-27–Cys-54, Cys-34–Cys-48, and Cys-38–Cys-55. Residues 65-123 constitute a propeptide that is removed on maturation; the sequence is VPTTSPTPLSDSTRGVIDDILTVRFTTDYFEVSSKKNMVEESEVGQGTQTSLPNVHHSS. A disordered region spans residues 100–123; it reads KNMVEESEVGQGTQTSLPNVHHSS. Residues 109–123 show a composition bias toward polar residues; it reads GQGTQTSLPNVHHSS.

The protein belongs to the beta-defensin family. Post-translationally, the three-dimensional structure formed by the three intramolecular disulfide bridges is indispensable for antimicrobial activity.

It is found in the secreted. Its function is as follows. Host defense peptide that exhibits antimicrobial activity against both Gram-negative bacteria, such as E.coli and S.typhimurium, and Gram-positive bacteria, such as S.aureus and B.subtilis. Inhibits cell adhesion of E.coli on intestinal epithelial enterocytes. Causes rapid permeabilization of both the outer and inner membrane of E.coli, leading to morphological alterations on the bacterial surface. Binds to bacterial lipopolysaccharides (LPS) with high affinity, and may thereby be involved in immunoregulation through LPS neutralization. May contribute to epididymal innate immunity and protect the sperm against attack by microorganisms. This Pongo pygmaeus (Bornean orangutan) protein is Defensin beta 118 (DEFB118).